The primary structure comprises 795 residues: Phenylalanine--tRNA ligase beta subunit (795 aa).

The region spanning 39 to 148 (AGSFHGVVVG…ADAPIGTDIR (110 aa)) is the tRNA-binding domain. Residues 401–476 (PKRATITLRR…RVYGYNNIPD (76 aa)) form the B5 domain. Positions 454, 460, 463, and 464 each coordinate Mg(2+). Positions 701–794 (SRFPANRRDI…LKERFQASLR (94 aa)) constitute an FDX-ACB domain.

This sequence belongs to the phenylalanyl-tRNA synthetase beta subunit family. Type 1 subfamily. As to quaternary structure, tetramer of two alpha and two beta subunits. Requires Mg(2+) as cofactor.

The protein localises to the cytoplasm. It carries out the reaction tRNA(Phe) + L-phenylalanine + ATP = L-phenylalanyl-tRNA(Phe) + AMP + diphosphate + H(+). The chain is Phenylalanine--tRNA ligase beta subunit from Shigella flexneri.